A 267-amino-acid chain; its full sequence is AMP/ADP-polyphosphate phosphotransferase (267 aa).

The protein belongs to the polyphosphate kinase 2 (PPK2) family. Class III subfamily. Requires Mn(2+) as cofactor.

The enzyme catalyses [phosphate](n) + ADP = [phosphate](n+1) + AMP. It catalyses the reaction [phosphate](n) + ATP = [phosphate](n+1) + ADP. In terms of biological role, uses inorganic polyphosphate (polyP) as a donor to convert both AMP to ADP and ADP to ATP. Can also use GMP, CMP, UMP, GDP, CDP and UDP. The protein is AMP/ADP-polyphosphate phosphotransferase of Meiothermus ruber (strain ATCC 35948 / DSM 1279 / VKM B-1258 / 21) (Thermus ruber).